Here is a 150-residue protein sequence, read N- to C-terminus: UPF0178 protein PC1_0756 (150 aa).

The protein belongs to the UPF0178 family.

This chain is UPF0178 protein PC1_0756, found in Pectobacterium carotovorum subsp. carotovorum (strain PC1).